Reading from the N-terminus, the 394-residue chain is Serine palmitoyltransferase (394 aa).

Residues 111–112 (GF), Ser-183, His-211, and Thr-239 each bind pyridoxal 5'-phosphate. Residue Lys-242 is modified to N6-(pyridoxal phosphate)lysine.

It belongs to the class-II pyridoxal-phosphate-dependent aminotransferase family. The cofactor is pyridoxal 5'-phosphate.

The enzyme catalyses L-serine + hexadecanoyl-CoA + H(+) = 3-oxosphinganine + CO2 + CoA. It participates in lipid metabolism; sphingolipid metabolism. Involved in de novo bacterial ceramide synthesis. Catalyzes the condensation of L-serine with palmitoyl-CoA (hexadecanoyl-CoA) to produce 3-oxosphinganine. Also capable of using alanine as substrate leading to the formation of 1-deoxysphinganine (1-deoxySa). Contributes to the levels of endogenous sphingolipids in its host. The chain is Serine palmitoyltransferase from Bacteroides thetaiotaomicron (strain ATCC 29148 / DSM 2079 / JCM 5827 / CCUG 10774 / NCTC 10582 / VPI-5482 / E50).